A 25-amino-acid polypeptide reads, in one-letter code: Glutamine synthetase 2 isozyme (25 aa).

It belongs to the glutamine synthetase family. As to quaternary structure, homohexamer.

The protein resides in the plastid. Its subcellular location is the chloroplast. The catalysed reaction is L-glutamate + NH4(+) + ATP = L-glutamine + ADP + phosphate + H(+). Functionally, plays a key role in the nitrogen metabolism of microorganisms, animals and plants. In Emiliania huxleyi (Coccolithophore), this protein is Glutamine synthetase 2 isozyme.